The chain runs to 134 residues: ATP synthase epsilon chain (134 aa).

Residues 94–104 (AKLAKSRAESH) are compositionally biased toward basic and acidic residues. The disordered stretch occupies residues 94–115 (AKLAKSRAESHLEDDDDNTDIN).

The protein belongs to the ATPase epsilon chain family. As to quaternary structure, F-type ATPases have 2 components, CF(1) - the catalytic core - and CF(0) - the membrane proton channel. CF(1) has five subunits: alpha(3), beta(3), gamma(1), delta(1), epsilon(1). CF(0) has three main subunits: a, b and c.

The protein resides in the cell membrane. In terms of biological role, produces ATP from ADP in the presence of a proton gradient across the membrane. The protein is ATP synthase epsilon chain of Staphylococcus epidermidis (strain ATCC 12228 / FDA PCI 1200).